A 106-amino-acid polypeptide reads, in one-letter code: Large ribosomal subunit protein uL24 (106 aa).

It belongs to the universal ribosomal protein uL24 family. As to quaternary structure, part of the 50S ribosomal subunit.

Its function is as follows. One of two assembly initiator proteins, it binds directly to the 5'-end of the 23S rRNA, where it nucleates assembly of the 50S subunit. One of the proteins that surrounds the polypeptide exit tunnel on the outside of the subunit. The chain is Large ribosomal subunit protein uL24 from Acidiphilium cryptum (strain JF-5).